Consider the following 210-residue polypeptide: Isomeliandiol synthase ISM1 (210 aa).

Helical transmembrane passes span 17–37 (FTLHAWNGLSLFLIISGTWFI), 50–70 (LLCWWALTGLIHIIQEGYFVF), 107–127 (IEGMAAVVMGPLSLLVVYAIV), 135–155 (ILQFGVSIAQLYGACLYFLTA), and 172–192 (YYVGQSSIWIIVPSLIAINFW). Residues 46–188 (GDRLLLCWWA…IWIIVPSLIA (143 aa)) enclose the EXPERA domain.

The protein belongs to the EBP family.

The protein resides in the membrane. It carries out the reaction 7,8-epoxymelianol = isomeliandiol. The protein operates within secondary metabolite biosynthesis; terpenoid biosynthesis. Its function is as follows. Isomerase involved in the biosynthesis of limonoids and quassinoids triterpene natural products such as ailanthone, chaparrinone, glaucarubinone and amarolide, allelopathic degraded triterpene lactones inhibiting the growth of other plants, and possessing antimalarial, antifeedant, insecticidal, anti-inflammatory and anticancer activities. Catalyzes the conversion of 7,8-epoxymelianol to isomeliandiol via skeletal rearrangements. This chain is Isomeliandiol synthase ISM1, found in Ailanthus altissima (Tree-of-heaven).